We begin with the raw amino-acid sequence, 352 residues long: N-acetyl-gamma-glutamyl-phosphate reductase (352 aa).

This sequence belongs to the NAGSA dehydrogenase family. Type 1 subfamily.

It is found in the cytoplasm. The enzyme catalyses N-acetyl-L-glutamate 5-semialdehyde + phosphate + NADP(+) = N-acetyl-L-glutamyl 5-phosphate + NADPH + H(+). The protein operates within amino-acid biosynthesis; L-arginine biosynthesis; N(2)-acetyl-L-ornithine from L-glutamate: step 3/4. In terms of biological role, catalyzes the NADPH-dependent reduction of N-acetyl-5-glutamyl phosphate to yield N-acetyl-L-glutamate 5-semialdehyde. The sequence is that of N-acetyl-gamma-glutamyl-phosphate reductase from Nostoc ellipsosporum.